We begin with the raw amino-acid sequence, 340 residues long: Adenosine receptor A2b (340 aa).

Residues 1-6 lie on the Extracellular side of the membrane; that stretch reads MNTMKT. A helical transmembrane segment spans residues 7-31; it reads TYIVLELIIAVLSIAGNVLVCWAVA. Topologically, residues 32–41 are cytoplasmic; sequence INSTLKNATN. A helical transmembrane segment spans residues 42 to 65; that stretch reads YFLVSLAVADIAVGLLAIPFAITI. The Extracellular segment spans residues 66–76; the sequence is SIGFQVDFHSC. A disulfide bond links Cys-76 and Cys-171. A helical transmembrane segment spans residues 77-99; sequence LFFACFVLVLTQSSIFSLLAVAI. Residues 100 to 119 are Cytoplasmic-facing; it reads DRYLAIKIPLRYNSLVTGKR. A helical transmembrane segment spans residues 120–142; that stretch reads ARGLIAVLWLLSFVIGLTPLMGW. The Extracellular segment spans residues 143 to 178; that stretch reads NKAMSGCPNSTNETGADHGAGHHGCFISCLFENVVT. Asn-151 and Asn-154 each carry an N-linked (GlcNAc...) asparagine glycan. Residue Glu-174 coordinates adenosine. Residues 179-203 traverse the membrane as a helical segment; sequence MSYMVYFNFFGCVLLPLIIMLGIYI. Residues 204-235 lie on the Cytoplasmic side of the membrane; that stretch reads KIFMVACKQLHQIELMGNSRTTLQKEVHAAKS. Residues 236-259 form a helical membrane-spanning segment; it reads LAIIVGLFAFCWLPLHILNCITHF. Asn-254 contributes to the adenosine binding site. Residues 260–267 lie on the Extracellular side of the membrane; sequence HEEFSKSK. Residues 268 to 291 traverse the membrane as a helical segment; the sequence is PEWVMYVAIILSHANSVINPIIYA. Residues Ser-279 and His-280 each coordinate adenosine. The Cytoplasmic portion of the chain corresponds to 292-340; the sequence is YRIRDFRYTFHKIISKILCKTDDFPKCTTDNNQHLTVTNVNAPAASVTI. Residue Cys-310 is the site of S-palmitoyl cysteine attachment.

This sequence belongs to the G-protein coupled receptor 1 family.

Its subcellular location is the cell membrane. In terms of biological role, receptor for adenosine. The activity of this receptor is mediated by G proteins which activate adenylyl cyclase. The sequence is that of Adenosine receptor A2b (ADORA2B) from Gallus gallus (Chicken).